The chain runs to 102 residues: Parathymosin (102 aa).

The tract at residues methionine 1–alanine 102 is disordered. Serine 2 is subject to N-acetylserine. Residue serine 2 is modified to Phosphoserine. Lysine 4 is subject to N6-acetyllysine. Phosphoserine occurs at positions 5 and 13. A compositionally biased stretch (basic and acidic residues) spans serine 13–valine 37. Lysine 15 is modified (N6-acetyllysine). The segment covering valine 38–glycine 76 has biased composition (acidic residues). Phosphothreonine is present on threonine 52. N6-acetyllysine is present on lysine 92.

The protein belongs to the pro/parathymosin family.

Its function is as follows. Parathymosin may mediate immune function by blocking the effect of prothymosin alpha which confers resistance to certain opportunistic infections. The sequence is that of Parathymosin (PTMS) from Bos taurus (Bovine).